A 540-amino-acid polypeptide reads, in one-letter code: 2,3-bisphosphoglycerate-independent phosphoglycerate mutase (540 aa).

Positions 24 and 74 each coordinate Mn(2+). Residue serine 74 is the Phosphoserine intermediate of the active site. Residues histidine 135, 165 to 166, arginine 197, arginine 203, 268 to 271, and lysine 341 each bind substrate; these read RD and RPDR. Aspartate 408, histidine 412, aspartate 449, histidine 450, and histidine 467 together coordinate Mn(2+).

The protein belongs to the BPG-independent phosphoglycerate mutase family. Monomer. Mn(2+) serves as cofactor.

The catalysed reaction is (2R)-2-phosphoglycerate = (2R)-3-phosphoglycerate. Its pathway is carbohydrate degradation; glycolysis; pyruvate from D-glyceraldehyde 3-phosphate: step 3/5. Its function is as follows. Catalyzes the interconversion of 2-phosphoglycerate and 3-phosphoglycerate. The protein is 2,3-bisphosphoglycerate-independent phosphoglycerate mutase of Prochlorococcus marinus (strain SARG / CCMP1375 / SS120).